Here is a 194-residue protein sequence, read N- to C-terminus: Small ribosomal subunit protein uS7 (194 aa).

The protein belongs to the universal ribosomal protein uS7 family. In terms of assembly, part of the 30S ribosomal subunit.

In terms of biological role, one of the primary rRNA binding proteins, it binds directly to 16S rRNA where it nucleates assembly of the head domain of the 30S subunit. Is located at the subunit interface close to the decoding center. The sequence is that of Small ribosomal subunit protein uS7 from Archaeoglobus fulgidus (strain ATCC 49558 / DSM 4304 / JCM 9628 / NBRC 100126 / VC-16).